We begin with the raw amino-acid sequence, 364 residues long: tRNA 2-selenouridine synthase (364 aa).

The Rhodanese domain occupies 14–137; the sequence is LIADTPIIDV…LRQTAIQATI (124 aa). The active-site S-selanylcysteine intermediate is the Cys97.

This sequence belongs to the SelU family. As to quaternary structure, monomer.

The enzyme catalyses 5-methylaminomethyl-2-thiouridine(34) in tRNA + selenophosphate + (2E)-geranyl diphosphate + H2O + H(+) = 5-methylaminomethyl-2-selenouridine(34) in tRNA + (2E)-thiogeraniol + phosphate + diphosphate. It catalyses the reaction 5-methylaminomethyl-2-thiouridine(34) in tRNA + (2E)-geranyl diphosphate = 5-methylaminomethyl-S-(2E)-geranyl-thiouridine(34) in tRNA + diphosphate. The catalysed reaction is 5-methylaminomethyl-S-(2E)-geranyl-thiouridine(34) in tRNA + selenophosphate + H(+) = 5-methylaminomethyl-2-(Se-phospho)selenouridine(34) in tRNA + (2E)-thiogeraniol. It carries out the reaction 5-methylaminomethyl-2-(Se-phospho)selenouridine(34) in tRNA + H2O = 5-methylaminomethyl-2-selenouridine(34) in tRNA + phosphate. Involved in the post-transcriptional modification of the uridine at the wobble position (U34) of tRNA(Lys), tRNA(Glu) and tRNA(Gln). Catalyzes the conversion of 2-thiouridine (S2U-RNA) to 2-selenouridine (Se2U-RNA). Acts in a two-step process involving geranylation of 2-thiouridine (S2U) to S-geranyl-2-thiouridine (geS2U) and subsequent selenation of the latter derivative to 2-selenouridine (Se2U) in the tRNA chain. The chain is tRNA 2-selenouridine synthase from Shigella flexneri.